The chain runs to 616 residues: Dihydroxy-acid dehydratase (616 aa).

Asp-81 contributes to the Mg(2+) binding site. Cys-122 is a [2Fe-2S] cluster binding site. The Mg(2+) site is built by Asp-123 and Lys-124. N6-carboxylysine is present on Lys-124. Cys-195 contributes to the [2Fe-2S] cluster binding site. Glu-491 serves as a coordination point for Mg(2+). The Proton acceptor role is filled by Ser-517.

Belongs to the IlvD/Edd family. In terms of assembly, homodimer. [2Fe-2S] cluster serves as cofactor. It depends on Mg(2+) as a cofactor.

It catalyses the reaction (2R)-2,3-dihydroxy-3-methylbutanoate = 3-methyl-2-oxobutanoate + H2O. It carries out the reaction (2R,3R)-2,3-dihydroxy-3-methylpentanoate = (S)-3-methyl-2-oxopentanoate + H2O. The protein operates within amino-acid biosynthesis; L-isoleucine biosynthesis; L-isoleucine from 2-oxobutanoate: step 3/4. It functions in the pathway amino-acid biosynthesis; L-valine biosynthesis; L-valine from pyruvate: step 3/4. In terms of biological role, functions in the biosynthesis of branched-chain amino acids. Catalyzes the dehydration of (2R,3R)-2,3-dihydroxy-3-methylpentanoate (2,3-dihydroxy-3-methylvalerate) into 2-oxo-3-methylpentanoate (2-oxo-3-methylvalerate) and of (2R)-2,3-dihydroxy-3-methylbutanoate (2,3-dihydroxyisovalerate) into 2-oxo-3-methylbutanoate (2-oxoisovalerate), the penultimate precursor to L-isoleucine and L-valine, respectively. The protein is Dihydroxy-acid dehydratase of Shewanella woodyi (strain ATCC 51908 / MS32).